The chain runs to 508 residues: 3-octaprenyl-4-hydroxybenzoate carboxy-lyase (508 aa).

A Mn(2+)-binding site is contributed by N172. Prenylated FMN contacts are provided by residues I175–R177, R189–L191, and R194–G195. E238 contacts Mn(2+). The active-site Proton donor is D287. The segment at G483–V508 is disordered. The span at P498–V508 shows a compositional bias: basic and acidic residues.

It belongs to the UbiD family. In terms of assembly, homohexamer. Prenylated FMN is required as a cofactor. The cofactor is Mn(2+).

It localises to the cell membrane. It catalyses the reaction a 4-hydroxy-3-(all-trans-polyprenyl)benzoate + H(+) = a 2-(all-trans-polyprenyl)phenol + CO2. The protein operates within cofactor biosynthesis; ubiquinone biosynthesis. Catalyzes the decarboxylation of 3-octaprenyl-4-hydroxy benzoate to 2-octaprenylphenol, an intermediate step in ubiquinone biosynthesis. The sequence is that of 3-octaprenyl-4-hydroxybenzoate carboxy-lyase from Chromohalobacter salexigens (strain ATCC BAA-138 / DSM 3043 / CIP 106854 / NCIMB 13768 / 1H11).